Here is a 327-residue protein sequence, read N- to C-terminus: Lipoyl synthase (327 aa).

7 residues coordinate [4Fe-4S] cluster: cysteine 74, cysteine 79, cysteine 85, cysteine 100, cysteine 104, cysteine 107, and serine 314. Residues 86–303 (FSGGTATFMI…AEEGERMGFK (218 aa)) form the Radical SAM core domain.

The protein belongs to the radical SAM superfamily. Lipoyl synthase family. The cofactor is [4Fe-4S] cluster.

It is found in the cytoplasm. The catalysed reaction is [[Fe-S] cluster scaffold protein carrying a second [4Fe-4S](2+) cluster] + N(6)-octanoyl-L-lysyl-[protein] + 2 oxidized [2Fe-2S]-[ferredoxin] + 2 S-adenosyl-L-methionine + 4 H(+) = [[Fe-S] cluster scaffold protein] + N(6)-[(R)-dihydrolipoyl]-L-lysyl-[protein] + 4 Fe(3+) + 2 hydrogen sulfide + 2 5'-deoxyadenosine + 2 L-methionine + 2 reduced [2Fe-2S]-[ferredoxin]. It functions in the pathway protein modification; protein lipoylation via endogenous pathway; protein N(6)-(lipoyl)lysine from octanoyl-[acyl-carrier-protein]: step 2/2. Catalyzes the radical-mediated insertion of two sulfur atoms into the C-6 and C-8 positions of the octanoyl moiety bound to the lipoyl domains of lipoate-dependent enzymes, thereby converting the octanoylated domains into lipoylated derivatives. The protein is Lipoyl synthase of Pseudomonas paraeruginosa (strain DSM 24068 / PA7) (Pseudomonas aeruginosa (strain PA7)).